The primary structure comprises 385 residues: Probable thioesterase PNKD (385 aa).

Residues 31-42 (NKASQNRSRALQ) show a composition bias toward polar residues. The segment at 31–57 (NKASQNRSRALQSHSSPECKEEPEPLS) is disordered. Positions 172, 174, 176, 177, 229, 253, and 291 each coordinate Zn(2+).

Belongs to the metallo-beta-lactamase superfamily. Glyoxalase II family. Zn(2+) serves as cofactor. Post-translationally, undergoes cleavage at the N-terminus.

The protein localises to the cell membrane. Its subcellular location is the mitochondrion. It carries out the reaction a thioester + H2O = a thiol + a carboxylate + H(+). In terms of biological role, probable thioesterase that may play a role in cellular detoxification processes; it likely acts on a yet-unknown alpha-hydroxythioester substrate. In vitro, it is able to catalyze the hydrolysis of S-D-lactoyl-glutathione to form glutathione and D-lactic acid at very low rate, though this reaction is not physiologically relevant in vivo. The sequence is that of Probable thioesterase PNKD (PNKD) from Bos taurus (Bovine).